The primary structure comprises 156 residues: Endogenous retrovirus group K member 7 Pro protein (156 aa).

One can recognise a Peptidase A2 domain in the interval 21–96 (FEGLVDTGAD…IPLNLWGRDL (76 aa)). Asp26 is a catalytic residue. The G-patch domain occupies 111–156 (YSPTSQKIMTKMGYIPGKGLGKNEDGIKVPVEAKINQEREGIGYPF).

Belongs to the peptidase A2 family. HERV class-II K(HML-2) subfamily. In terms of assembly, active as a homodimer. Autoproteolytically processed at the N-terminus. Expected C-terminal autoprocessing not detected. The sequence shown is that of the processed Pro protein.

It carries out the reaction Processing at the authentic HIV-1 PR recognition site and release of the mature p17 matrix and the p24 capsid protein, as a result of the cleavage of the -SQNY-|-PIVQ- cleavage site.. Its function is as follows. Retroviral proteases have roles in processing of the primary translation products and the maturation of the viral particle. Endogenous Pro proteins may have kept, lost or modified their original function during evolution. This endogenous protein has retained most of the characteristics of retroviral proteases. This chain is Endogenous retrovirus group K member 7 Pro protein (ERVK-7), found in Homo sapiens (Human).